A 32-amino-acid chain; its full sequence is Chaperone protein DnaK (32 aa).

This sequence belongs to the heat shock protein 70 family.

Its function is as follows. Acts as a chaperone. The chain is Chaperone protein DnaK from Anabaena sp. (strain L31).